The sequence spans 452 residues: 3-phosphoshikimate 1-carboxyvinyltransferase (452 aa).

A compositionally biased stretch (low complexity) spans 1 to 17 (MSHAAAAKPATARKSQA). The interval 1 to 26 (MSHAAAAKPATARKSQALSGTARVPG) is disordered. Residues Lys-28, Ser-29, and Arg-33 each contribute to the 3-phosphoshikimate site. Lys-28 is a phosphoenolpyruvate binding site. Residues Gly-100 and Arg-128 each coordinate phosphoenolpyruvate. Ser-174, Gln-176, Asp-327, and Lys-354 together coordinate 3-phosphoshikimate. Gln-176 serves as a coordination point for phosphoenolpyruvate. Catalysis depends on Asp-327, which acts as the Proton acceptor. Phosphoenolpyruvate is bound by residues Arg-358 and Arg-409.

It belongs to the EPSP synthase family. Monomer.

It is found in the cytoplasm. The catalysed reaction is 3-phosphoshikimate + phosphoenolpyruvate = 5-O-(1-carboxyvinyl)-3-phosphoshikimate + phosphate. The protein operates within metabolic intermediate biosynthesis; chorismate biosynthesis; chorismate from D-erythrose 4-phosphate and phosphoenolpyruvate: step 6/7. Functionally, catalyzes the transfer of the enolpyruvyl moiety of phosphoenolpyruvate (PEP) to the 5-hydroxyl of shikimate-3-phosphate (S3P) to produce enolpyruvyl shikimate-3-phosphate and inorganic phosphate. This Mesorhizobium japonicum (strain LMG 29417 / CECT 9101 / MAFF 303099) (Mesorhizobium loti (strain MAFF 303099)) protein is 3-phosphoshikimate 1-carboxyvinyltransferase.